The chain runs to 90 residues: Small regulatory polypeptide of amino acid response (90 aa).

Topologically, residues 1-18 (MGAKAPRGPKVAQWAMET) are lumenal. A helical transmembrane segment spans residues 19–39 (AVIGVVVVLFVVTVAITCVLC). Residues 40–90 (CFSCDSRAQDPQGGPGRSFTVATFRQEASLFTGPVRHAQPVPSAQDFWTFM) are Cytoplasmic-facing.

Interacts with components of the lysosomal V-ATPase complex. Interacts with ATP6V0A1. Interacts with ATP6V0A2. In terms of tissue distribution, highly expressed in lung, heart and skeletal muscle.

The protein localises to the late endosome membrane. It localises to the lysosome membrane. Its function is as follows. Negative regulator of amino acid sensing and mTORC1, a signaling complex promoting cell growth in response to growth factors, energy levels and amino acids. Negatively regulates mTORC1 activation by inhibiting recruitment of mTORC1 to lysosomes upon stimulation with amino acids: acts by promoting the formation of a tightly bound supercomplex composed of the lysosomal V-ATPase, Ragulator and Rag GTPases, preventing recruitment of mTORC1. Acts as a regulator of muscle regeneration following injury by regulating mTORC1 activation. The polypeptide is Small regulatory polypeptide of amino acid response (Homo sapiens (Human)).